We begin with the raw amino-acid sequence, 451 residues long: Tubulin beta-1 chain (451 aa).

Residues 1-4 carry the MREI motif motif; the sequence is MREI. GTP is bound by residues Gln-11, Glu-69, Ser-138, Gly-142, Thr-143, and Gly-144. Mg(2+) is bound at residue Glu-69. Ser-172 is modified (phosphoserine; by CDK1). 2 residues coordinate GTP: Asn-204 and Asn-226. Positions 430–451 are disordered; sequence AGLEDSEEDVEEAEVEAEDKDH. The span at 433 to 451 shows a compositional bias: acidic residues; the sequence is EDSEEDVEEAEVEAEDKDH. Position 435 is a phosphoserine (Ser-435). A 5-glutamyl polyglutamate modification is found at Glu-440.

It belongs to the tubulin family. Dimer of alpha and beta chains. A typical microtubule is a hollow water-filled tube with an outer diameter of 25 nm and an inner diameter of 15 nM. Alpha-beta heterodimers associate head-to-tail to form protofilaments running lengthwise along the microtubule wall with the beta-tubulin subunit facing the microtubule plus end conferring a structural polarity. Microtubules usually have 13 protofilaments but different protofilament numbers can be found in some organisms and specialized cells. Interacts with RANBP10. It depends on Mg(2+) as a cofactor. Some glutamate residues at the C-terminus are polyglycylated, resulting in polyglycine chains on the gamma-carboxyl group. Glycylation is mainly limited to tubulin incorporated into axonemes (cilia and flagella) whereas glutamylation is prevalent in neuronal cells, centrioles, axonemes, and the mitotic spindle. Both modifications can coexist on the same protein on adjacent residues, and lowering polyglycylation levels increases polyglutamylation, and reciprocally. Cilia and flagella glycylation is required for their stability and maintenance. Flagella glycylation controls sperm motility. In terms of processing, some glutamate residues at the C-terminus are polyglutamylated, resulting in polyglutamate chains on the gamma-carboxyl group. Polyglutamylation plays a key role in microtubule severing by spastin (SPAST). SPAST preferentially recognizes and acts on microtubules decorated with short polyglutamate tails: severing activity by SPAST increases as the number of glutamates per tubulin rises from one to eight, but decreases beyond this glutamylation threshold. Glutamylation is also involved in cilia motility. Post-translationally, phosphorylated on Ser-172 by CDK1 during the cell cycle, from metaphase to telophase, but not in interphase. This phosphorylation inhibits tubulin incorporation into microtubules.

The protein resides in the cytoplasm. It localises to the cytoskeleton. Tubulin is the major constituent of microtubules, a cylinder consisting of laterally associated linear protofilaments composed of alpha- and beta-tubulin heterodimers. Microtubules grow by the addition of GTP-tubulin dimers to the microtubule end, where a stabilizing cap forms. Below the cap, tubulin dimers are in GDP-bound state, owing to GTPase activity of alpha-tubulin. The sequence is that of Tubulin beta-1 chain (Tubb1) from Mus musculus (Mouse).